Here is a 530-residue protein sequence, read N- to C-terminus: Pyridoxine/pyridoxamine 5'-phosphate oxidase 1, chloroplastic (530 aa).

The N-terminal 64 residues, methionine 1–asparagine 64, are a transit peptide targeting the chloroplast. Methionine 65 bears the N-acetylmethionine mark. A YjeF N-terminal domain is found at alanine 81–leucine 297. (6S)-NADPHX is bound at residue asparagine 131–aspartate 135. The K(+) site is built by asparagine 132 and aspartate 196. Residues glycine 200–alanine 206 and aspartate 238 contribute to the (6S)-NADPHX site. Residue serine 241 coordinates K(+). Glutamate 247–histidine 250 provides a ligand contact to pyridoxal 5'-phosphate. Arginine 321–tyrosine 324 provides a ligand contact to substrate. Valine 325–proline 327 lines the pyridoxal 5'-phosphate pocket. Arginine 374–leucine 377 provides a ligand contact to FMN. Lysine 379 is a binding site for pyridoxal 5'-phosphate. FMN-binding positions include phenylalanine 389 to threonine 390, lysine 395 to lysine 396, and glutamine 418. 3 residues coordinate pyridoxal 5'-phosphate: tyrosine 436, arginine 440, and serine 444. FMN contacts are provided by residues glutamine 453–serine 454 and tryptophan 499. A pyridoxal 5'-phosphate-binding site is contributed by arginine 505–histidine 507. Residue arginine 509 participates in FMN binding.

The protein in the N-terminal section; belongs to the NnrE/AIBP family. In the C-terminal section; belongs to the pyridoxamine 5'-phosphate oxidase family. As to quaternary structure, homodimer. FMN serves as cofactor. K(+) is required as a cofactor. In terms of tissue distribution, expressed in leaves, stems, flowers and roots.

It localises to the plastid. It is found in the chloroplast. It catalyses the reaction pyridoxamine 5'-phosphate + O2 + H2O = pyridoxal 5'-phosphate + H2O2 + NH4(+). The enzyme catalyses pyridoxine 5'-phosphate + O2 = pyridoxal 5'-phosphate + H2O2. The catalysed reaction is (6R)-NADHX = (6S)-NADHX. It carries out the reaction (6R)-NADPHX = (6S)-NADPHX. The protein operates within cofactor metabolism; pyridoxal 5'-phosphate salvage; pyridoxal 5'-phosphate from pyridoxamine 5'-phosphate: step 1/1. It participates in cofactor metabolism; pyridoxal 5'-phosphate salvage; pyridoxal 5'-phosphate from pyridoxine 5'-phosphate: step 1/1. Catalyzes the oxidation of either pyridoxine 5'-phosphate (PNP) or pyridoxamine 5'-phosphate (PMP) into pyridoxal 5'-phosphate (PLP). Involved in the PLP salvage pathway. Has a higher preference for PNP over PMP. May also catalyze the epimerization of the S- and R-forms of NAD(P)HX, a damaged form of NAD(P)H that is a result of enzymatic or heat-dependent hydration. This is a prerequisite for the S-specific NAD(P)H-hydrate dehydratase to allow the repair of both epimers of NAD(P)HX. The sequence is that of Pyridoxine/pyridoxamine 5'-phosphate oxidase 1, chloroplastic (PPOX1) from Arabidopsis thaliana (Mouse-ear cress).